We begin with the raw amino-acid sequence, 710 residues long: Ephexin-1 (710 aa).

Basic and acidic residues predominate over residues 1–20; it reads METKNSEDWGKPQRKSESSS. The disordered stretch occupies residues 1-146; it reads METKNSEDWG…TPEECPALTD (146 aa). Residues 1-272 are regulatory region; modulates activity toward RHOA, RAC1 and CDC42; sequence METKNSEDWG…VLDILQPEEI (272 aa). Residues 123–137 are compositionally biased toward polar residues; sequence QEASESSSTPGNGTT. Tyr-177 carries the post-translational modification Phosphotyrosine. The interval 192–234 is disordered; sequence RRQQDAEIQGNSDGSQVGEDAGEEEEEEEEGEEEELASPPERR. Residues 211-227 are compositionally biased toward acidic residues; it reads DAGEEEEEEEEGEEEEL. Residues 273–457 enclose the DH domain; it reads RLQEAMFELV…EMVVKACNEG (185 aa). The 113-residue stretch at 489–601 folds into the PH domain; it reads WLLKQGELQQ…WMTSLAPNRR (113 aa). Positions 612–673 constitute an SH3 domain; the sequence is LDCPQVQCVH…PSSMTEEILN (62 aa). Residues 688-699 show a composition bias toward basic and acidic residues; sequence HKMEDPQRSQNK. The interval 688 to 710 is disordered; the sequence is HKMEDPQRSQNKDRRKLGSRNRQ. Residues 700–710 are compositionally biased toward basic residues; that stretch reads DRRKLGSRNRQ.

Interacts with CDK5R1 and EPHA4; activated by EPHA4 through the CDK5 kinase. Post-translationally, src-dependent phosphorylation at Tyr-177 upon EPHA4 activation increases the guanine exchange factor activity toward RHOA. Phosphorylation by CDK5 upon EPHA4 activation by EFNA1 may regulate dendritic spine morphogenesis. In terms of tissue distribution, highly expressed in brain and to a lower extent in eye.

It localises to the cytoplasm. Its subcellular location is the membrane. The protein resides in the cell projection. It is found in the growth cone. In terms of biological role, acts as a guanine nucleotide exchange factor (GEF) which differentially activates the GTPases RHOA, RAC1 and CDC42. Plays a role in axon guidance regulating ephrin-induced growth cone collapse and dendritic spine morphogenesis. Upon activation by ephrin through EPHA4, the GEF activity switches toward RHOA resulting in its activation. Activated RHOA promotes cone retraction at the expense of RAC1- and CDC42-stimulated growth cone extension. This Mus musculus (Mouse) protein is Ephexin-1 (Ngef).